The following is a 342-amino-acid chain: Small ribosomal subunit protein uS2 (342 aa).

A disordered region spans residues 235-283; sequence EENAPFEQDEPRKPSQKPKQNRPENKPRFDKQAPRAAAKPEVKAEVKPE. Over residues 255-283 the composition is skewed to basic and acidic residues; the sequence is NRPENKPRFDKQAPRAAAKPEVKAEVKPE.

This sequence belongs to the universal ribosomal protein uS2 family.

This chain is Small ribosomal subunit protein uS2, found in Acholeplasma laidlawii (strain PG-8A).